A 148-amino-acid polypeptide reads, in one-letter code: Hemoglobin subunit beta-1 (148 aa).

The Globin domain occupies 3 to 148; that stretch reads EWTDAERTAI…VVSALCRQYH (146 aa). 2 residues coordinate heme b: H64 and H93.

In terms of assembly, heterotetramer of two alpha chains and two beta chains. In terms of tissue distribution, red blood cells.

Involved in oxygen transport from gills to the various peripheral tissues. This chain is Hemoglobin subunit beta-1 (ba1), found in Danio rerio (Zebrafish).